The primary structure comprises 611 residues: Threonine--tRNA ligase (611 aa).

The disordered stretch occupies residues 1–27 (MAGPEPEPVSSAAATTPAPSAPVVLPK). The span at 8–24 (PVSSAAATTPAPSAPVV) shows a compositional bias: low complexity. Residues 209–502 (DHRRIGKDLD…MTENYAGDYP (294 aa)) form a catalytic region. Zn(2+)-binding residues include cysteine 302, histidine 353, and histidine 479.

It belongs to the class-II aminoacyl-tRNA synthetase family. As to quaternary structure, homodimer. The cofactor is Zn(2+).

The protein resides in the cytoplasm. It carries out the reaction tRNA(Thr) + L-threonine + ATP = L-threonyl-tRNA(Thr) + AMP + diphosphate + H(+). In terms of biological role, catalyzes the attachment of threonine to tRNA(Thr) in a two-step reaction: L-threonine is first activated by ATP to form Thr-AMP and then transferred to the acceptor end of tRNA(Thr). Also edits incorrectly charged L-seryl-tRNA(Thr). The polypeptide is Threonine--tRNA ligase (Synechococcus sp. (strain CC9605)).